Consider the following 201-residue polypeptide: FMN-dependent NADH:quinone oxidoreductase (201 aa).

Residues Ser9, 16–18 (SVS), and 93–96 (MYNF) each bind FMN.

The protein belongs to the azoreductase type 1 family. As to quaternary structure, homodimer. FMN serves as cofactor.

It carries out the reaction 2 a quinone + NADH + H(+) = 2 a 1,4-benzosemiquinone + NAD(+). It catalyses the reaction N,N-dimethyl-1,4-phenylenediamine + anthranilate + 2 NAD(+) = 2-(4-dimethylaminophenyl)diazenylbenzoate + 2 NADH + 2 H(+). Functionally, quinone reductase that provides resistance to thiol-specific stress caused by electrophilic quinones. In terms of biological role, also exhibits azoreductase activity. Catalyzes the reductive cleavage of the azo bond in aromatic azo compounds to the corresponding amines. This chain is FMN-dependent NADH:quinone oxidoreductase, found in Gluconacetobacter diazotrophicus (strain ATCC 49037 / DSM 5601 / CCUG 37298 / CIP 103539 / LMG 7603 / PAl5).